The following is a 321-amino-acid chain: Anthranilate phosphoribosyltransferase (321 aa).

5-phospho-alpha-D-ribose 1-diphosphate contacts are provided by residues Gly72, 75–76 (GD), Thr80, 82–85 (NVST), 99–107 (KHGNVSITS), and Ser111. Anthranilate is bound at residue Gly72. Ser84 is a binding site for Mg(2+). Asn102 contacts anthranilate. Position 157 (Arg157) interacts with anthranilate. Mg(2+) is bound by residues Asp216 and Glu217.

It belongs to the anthranilate phosphoribosyltransferase family. Homodimer. Mg(2+) is required as a cofactor.

It catalyses the reaction N-(5-phospho-beta-D-ribosyl)anthranilate + diphosphate = 5-phospho-alpha-D-ribose 1-diphosphate + anthranilate. It participates in amino-acid biosynthesis; L-tryptophan biosynthesis; L-tryptophan from chorismate: step 2/5. In terms of biological role, catalyzes the transfer of the phosphoribosyl group of 5-phosphorylribose-1-pyrophosphate (PRPP) to anthranilate to yield N-(5'-phosphoribosyl)-anthranilate (PRA). The chain is Anthranilate phosphoribosyltransferase from Methanococcus maripaludis (strain DSM 14266 / JCM 13030 / NBRC 101832 / S2 / LL).